We begin with the raw amino-acid sequence, 36 residues long: METNDLGFVASLMFVLVPTVFLIVLFIQTNSREGSS.

Residues 7–27 (GFVASLMFVLVPTVFLIVLFI) traverse the membrane as a helical segment.

It belongs to the PsbM family. As to quaternary structure, PSII is composed of 1 copy each of membrane proteins PsbA, PsbB, PsbC, PsbD, PsbE, PsbF, PsbH, PsbI, PsbJ, PsbK, PsbL, PsbM, PsbT, PsbX, PsbY, PsbZ, Psb30/Ycf12, peripheral proteins PsbO, CyanoQ (PsbQ), PsbU, PsbV and a large number of cofactors. It forms dimeric complexes.

It is found in the cellular thylakoid membrane. Its function is as follows. One of the components of the core complex of photosystem II (PSII). PSII is a light-driven water:plastoquinone oxidoreductase that uses light energy to abstract electrons from H(2)O, generating O(2) and a proton gradient subsequently used for ATP formation. It consists of a core antenna complex that captures photons, and an electron transfer chain that converts photonic excitation into a charge separation. This subunit is found at the monomer-monomer interface. This is Photosystem II reaction center protein M from Synechococcus sp. (strain CC9311).